Consider the following 823-residue polypeptide: Dimethyl sulfoxide/trimethylamine N-oxide reductase (823 aa).

The segment at residues 1-42 (MTKFSGNELRAELYRRAFLSYSVAPGALGMFGRSLLAKGARA) is a signal peptide (tat-type signal). Mo-bis(molybdopterin guanine dinucleotide) is bound by residues 156 to 160 (YGWKS), Trp-158, Ser-189, 232 to 233 (KT), 262 to 263 (ID), 283 to 285 (QTD), 364 to 365 (WS), Arg-368, Asn-476, His-480, 500 to 501 (HD), Arg-523, Asp-553, 685 to 686 (HP), 691 to 693 (HSQ), Asn-779, and 796 to 797 (GQ).

Homodimer. Requires Mo-bis(molybdopterin guanine dinucleotide) as cofactor. In terms of processing, predicted to be exported by the Tat system. The position of the signal peptide cleavage has been experimentally proven.

The protein resides in the periplasm. It carries out the reaction dimethyl sulfide + a menaquinone + H2O = dimethyl sulfoxide + a menaquinol. The enzyme catalyses trimethylamine + 2 Fe(III)-[cytochrome c] + H2O = trimethylamine N-oxide + 2 Fe(II)-[cytochrome c] + 3 H(+). In terms of biological role, catalyzes the reduction of dimethyl sulfoxide (DMSO) and trimethylamine N-oxide (TMAO) to dimethyl sulfide (DMS) and trimethylamine, respectively. The terminal DMSO reductase can also use various sulfoxides and N-oxide compounds as terminal electron acceptor in addition to DMSO and TMAO. This chain is Dimethyl sulfoxide/trimethylamine N-oxide reductase (dorA), found in Rhodobacter capsulatus (Rhodopseudomonas capsulata).